A 296-amino-acid chain; its full sequence is tRNA dimethylallyltransferase (296 aa).

Residue 2–9 (GPTASGKT) participates in ATP binding. Residue 4–9 (TASGKT) coordinates substrate. Interaction with substrate tRNA regions lie at residues 27–30 (DSAL), 151–155 (QRLSR), and 232–237 (RCVGYR).

Belongs to the IPP transferase family. As to quaternary structure, monomer. Mg(2+) is required as a cofactor.

The catalysed reaction is adenosine(37) in tRNA + dimethylallyl diphosphate = N(6)-dimethylallyladenosine(37) in tRNA + diphosphate. Functionally, catalyzes the transfer of a dimethylallyl group onto the adenine at position 37 in tRNAs that read codons beginning with uridine, leading to the formation of N6-(dimethylallyl)adenosine (i(6)A). The protein is tRNA dimethylallyltransferase of Shewanella baltica (strain OS155 / ATCC BAA-1091).